We begin with the raw amino-acid sequence, 678 residues long: Secretin ExeD (678 aa).

The first 25 residues, 1-25 (MINKGKGWRLATVAAALMMAGSAWA), serve as a signal peptide directing secretion. Residues 26–122 (TEYSASFKNA…VVDETNPGIG (97 aa)) form an N0 region. An N1 region spans residues 124 to 188 (EMVTRVVPVR…EVVRRVDKAG (65 aa)). The interval 189–264 (DQEVDIIKLK…MVRQLDRDLQ (76 aa)) is N2. The segment at 267 to 348 (GNTRVFYLKY…ELEQVVAKLD (82 aa)) is N3. The segment at 353–602 (QVLVEAIIVE…VFIRPTILRD (250 aa)) is secretin. The segment at 604 to 678 (NVYSGISSNK…GVQPFVQGNK (75 aa)) is s domain.

It belongs to the bacterial secretin family. GSP D subfamily. As to quaternary structure, forms a cylindrical channel with 15 subunits.

The protein localises to the cell outer membrane. Its function is as follows. Involved in a type II secretion system (T2SS, formerly general secretion pathway, GSP) for the export of proteins. This subunit forms the outer membrane channel. This Aeromonas hydrophila protein is Secretin ExeD (exeD).